The primary structure comprises 20 residues: M-poneritoxin-Ng1f (20 aa).

Residue Lys-20 is modified to Lysine amide.

In terms of tissue distribution, expressed by the venom gland.

It localises to the secreted. It is found in the target cell membrane. Its function is as follows. Has activity against Gram-positive bacteria. Has insecticidal and hemolytic activities. May act by disrupting the integrity of the bacterial cell membrane. The polypeptide is M-poneritoxin-Ng1f (Neoponera goeldii (Ponerine ant)).